Here is a 259-residue protein sequence, read N- to C-terminus: Sesquipedalian-2 (259 aa).

A PH domain is found at 17–121; the sequence is PADHTGFLRS…WVKALSRASF (105 aa). Residues 124–150 adopt a coiled-coil conformation; sequence MRLVVRELESQLQDARQSLALHRCASQ. The interval 155–178 is disordered; sequence SCSKSQAPDHRAPDPENGHFLPRD. Basic and acidic residues predominate over residues 161 to 178; that stretch reads APDHRAPDPENGHFLPRD. A F&amp;H motif is present at residues 223 to 235; that stretch reads CFSTLHDWYGKEI.

The protein belongs to the sesquipedalian family. Forms homodimers and heterodimers with PHETA1. Interacts with OCRL and INPP5B.

Its subcellular location is the early endosome. It is found in the recycling endosome. It localises to the golgi apparatus. The protein resides in the trans-Golgi network. The protein localises to the cytoplasmic vesicle. Its subcellular location is the clathrin-coated vesicle. Its function is as follows. Plays a role in endocytic trafficking. Required for receptor recycling from endosomes, both to the trans-Golgi network and the plasma membrane. The protein is Sesquipedalian-2 of Mus musculus (Mouse).